The sequence spans 104 residues: Pyrimidine/purine nucleoside phosphorylase (104 aa).

This sequence belongs to the nucleoside phosphorylase PpnP family.

The catalysed reaction is a purine D-ribonucleoside + phosphate = a purine nucleobase + alpha-D-ribose 1-phosphate. It carries out the reaction adenosine + phosphate = alpha-D-ribose 1-phosphate + adenine. It catalyses the reaction cytidine + phosphate = cytosine + alpha-D-ribose 1-phosphate. The enzyme catalyses guanosine + phosphate = alpha-D-ribose 1-phosphate + guanine. The catalysed reaction is inosine + phosphate = alpha-D-ribose 1-phosphate + hypoxanthine. It carries out the reaction thymidine + phosphate = 2-deoxy-alpha-D-ribose 1-phosphate + thymine. It catalyses the reaction uridine + phosphate = alpha-D-ribose 1-phosphate + uracil. The enzyme catalyses xanthosine + phosphate = alpha-D-ribose 1-phosphate + xanthine. In terms of biological role, catalyzes the phosphorolysis of diverse nucleosides, yielding D-ribose 1-phosphate and the respective free bases. Can use uridine, adenosine, guanosine, cytidine, thymidine, inosine and xanthosine as substrates. Also catalyzes the reverse reactions. The chain is Pyrimidine/purine nucleoside phosphorylase from Geotalea daltonii (strain DSM 22248 / JCM 15807 / FRC-32) (Geobacter daltonii).